The sequence spans 523 residues: Glucose-1-phosphate adenylyltransferase large subunit 1, chloroplastic/amyloplastic (523 aa).

Residues 1–49 constitute a chloroplast transit peptide; sequence MSSMQFSSVLPLEGKACVSPVRREGSACERLKIGDSSSIRHERASRRMC.

The protein belongs to the bacterial/plant glucose-1-phosphate adenylyltransferase family. In terms of assembly, heterotetramer. As to expression, starchy endosperm and roots.

The protein localises to the plastid. It is found in the chloroplast. Its subcellular location is the amyloplast. It catalyses the reaction alpha-D-glucose 1-phosphate + ATP + H(+) = ADP-alpha-D-glucose + diphosphate. The protein operates within glycan biosynthesis; starch biosynthesis. Highly active without 3'phosphoglycerate, and is only slightly affected by the activator 3'phosphoglycerate and inhibitor orthophosphate. Functionally, this protein plays a role in synthesis of starch. It catalyzes the synthesis of the activated glycosyl donor, ADP-glucose from Glc-1-P and ATP. This chain is Glucose-1-phosphate adenylyltransferase large subunit 1, chloroplastic/amyloplastic, found in Hordeum vulgare (Barley).